The primary structure comprises 291 residues: MPELPEVETVRRGLEPVITGAKIVSVTLNRRDLRFPFPEAFSERLIGRTIMGLGRRAKYLLFHLSQNETILSHLGMSGSWRIEDDFLRERSSTVSKFVKHDHVVMDIQAKDGKVYHLTYNDVRRFGFMLLVDTRSLYEHPLLKKLGLEPMSNAFSGSYLQEVFVNKKISLKGVLLDQSIVAGLGNIYVCEALWRSRLSPQRGAFTLALKTECARELAASLAQNIRNVITEAISSGGSTLRDYIRTDGSLGYFQHSFSVYGREGKECLHCGIPIVRILQSGRSSFYCSQCQK.

Proline 2 (schiff-base intermediate with DNA) is an active-site residue. Catalysis depends on glutamate 3, which acts as the Proton donor. Lysine 58 acts as the Proton donor; for beta-elimination activity in catalysis. DNA is bound by residues histidine 100, arginine 123, and lysine 166. The FPG-type zinc finger occupies 257 to 291; it reads SVYGREGKECLHCGIPIVRILQSGRSSFYCSQCQK. Arginine 281 serves as the catalytic Proton donor; for delta-elimination activity.

Belongs to the FPG family. In terms of assembly, monomer. Zn(2+) is required as a cofactor.

The enzyme catalyses Hydrolysis of DNA containing ring-opened 7-methylguanine residues, releasing 2,6-diamino-4-hydroxy-5-(N-methyl)formamidopyrimidine.. It catalyses the reaction 2'-deoxyribonucleotide-(2'-deoxyribose 5'-phosphate)-2'-deoxyribonucleotide-DNA = a 3'-end 2'-deoxyribonucleotide-(2,3-dehydro-2,3-deoxyribose 5'-phosphate)-DNA + a 5'-end 5'-phospho-2'-deoxyribonucleoside-DNA + H(+). Functionally, involved in base excision repair of DNA damaged by oxidation or by mutagenic agents. Acts as a DNA glycosylase that recognizes and removes damaged bases. Has a preference for oxidized purines, such as 7,8-dihydro-8-oxoguanine (8-oxoG). Has AP (apurinic/apyrimidinic) lyase activity and introduces nicks in the DNA strand. Cleaves the DNA backbone by beta-delta elimination to generate a single-strand break at the site of the removed base with both 3'- and 5'-phosphates. This Bartonella henselae (strain ATCC 49882 / DSM 28221 / CCUG 30454 / Houston 1) (Rochalimaea henselae) protein is Formamidopyrimidine-DNA glycosylase.